The primary structure comprises 141 residues: Nucleoside diphosphate kinase (141 aa).

ATP-binding residues include lysine 11, phenylalanine 59, arginine 87, threonine 93, arginine 104, and asparagine 114. Histidine 117 serves as the catalytic Pros-phosphohistidine intermediate.

The protein belongs to the NDK family. As to quaternary structure, homotetramer. It depends on Mg(2+) as a cofactor.

The protein resides in the cytoplasm. It catalyses the reaction a 2'-deoxyribonucleoside 5'-diphosphate + ATP = a 2'-deoxyribonucleoside 5'-triphosphate + ADP. It carries out the reaction a ribonucleoside 5'-diphosphate + ATP = a ribonucleoside 5'-triphosphate + ADP. In terms of biological role, major role in the synthesis of nucleoside triphosphates other than ATP. The ATP gamma phosphate is transferred to the NDP beta phosphate via a ping-pong mechanism, using a phosphorylated active-site intermediate. The protein is Nucleoside diphosphate kinase of Burkholderia cenocepacia (strain HI2424).